The sequence spans 1045 residues: 3-hydroxy-3-methylglutaryl-coenzyme A reductase 2 (1045 aa).

Residues 1 to 24 (MSLPLKTIVHLVKPFACTARFSAR) lie on the Cytoplasmic side of the membrane. A helical transmembrane segment spans residues 25–45 (YPIHVIVVAVLLSAAAYLSVT). The Lumenal portion of the chain corresponds to 46–186 (QSYLNEWKLD…FSNKTSEFDQ (141 aa)). Residues Asn115, Asn150, Asn158, and Asn179 are each glycosylated (N-linked (GlcNAc...) asparagine). The chain crosses the membrane as a helical span at residues 187–207 (FDLFIILAAYLTLFYTLCCLF). The 169-residue stretch at 188–356 (DLFIILAAYL…ATFYSAILSM (169 aa)) folds into the SSD domain. Over 208–216 (NDMRKIGSK) the chain is Cytoplasmic. Residues 217–237 (FWLSFSALSNSACALYLSLYT) traverse the membrane as a helical segment. Residues 238-243 (THSLLK) lie on the Lumenal side of the membrane. Residues 244 to 264 (KPASLLSLVIGLPFIVVIIGF) form a helical membrane-spanning segment. Topologically, residues 265–301 (KHKVRLAAFSLQKFHRISIDKKITVSNIIYEAMFQEG) are cytoplasmic. A helical membrane pass occupies residues 302–322 (AYLIRDYLFYISSFIGCAIYA). At 323 to 324 (RH) the chain is on the lumenal side. The chain crosses the membrane as a helical span at residues 325-345 (LPGLVNFCILSTFMLVFDLLL). Topologically, residues 346-402 (SATFYSAILSMKLEINIIHRSTVIRQTLEEDGVVPTTADIIYKDETASEPHFLRSNV) are cytoplasmic. The chain crosses the membrane as a helical span at residues 403-423 (AIILGKASVIGLLLLINLYVF). The Lumenal segment spans residues 424–497 (TDKLNATILN…DSVSNAIRDQ (74 aa)). N-linked (GlcNAc...) asparagine glycosylation is found at Asn428 and Asn455. The helical transmembrane segment at 498–518 (FISKLLFFAFAVSISINVYLL) threads the bilayer. Over 519–1045 (NAAKIHTGYM…GPPCKTSALL (527 aa)) the chain is Cytoplasmic. The residue at position 565 (Thr565) is a Phosphothreonine. The active-site Charge relay system is Glu710. 716–722 (SAMRGCK) is a binding site for CoA. NADP(+) contacts are provided by residues 777 to 779 (SRF) and 804 to 812 (DAMGMNMIS). The active-site Charge relay system is the Lys844. 873–875 (VLK) serves as a coordination point for CoA. Catalysis depends on Asp920, which acts as the Charge relay system. 1015–1016 (SH) contributes to the CoA binding site. Residue His1016 is the Proton donor of the active site. The interval 1018–1045 (THNRKTNKANELPQPSNKGPPCKTSALL) is disordered. 1020-1021 (NR) is an NADP(+) binding site.

This sequence belongs to the HMG-CoA reductase family.

It is found in the endoplasmic reticulum membrane. The protein localises to the nucleus envelope. It carries out the reaction (R)-mevalonate + 2 NADP(+) + CoA = (3S)-3-hydroxy-3-methylglutaryl-CoA + 2 NADPH + 2 H(+). It functions in the pathway metabolic intermediate biosynthesis; (R)-mevalonate biosynthesis; (R)-mevalonate from acetyl-CoA: step 3/3. In terms of biological role, HMG-CoA reductase; part of the first module of ergosterol biosynthesis pathway constitutes by the early steps of the pathway, conserved across all eukaryotes, and which results in the formation of mevalonate from acetyl-coenzyme A (acetyl-CoA). HMG1 and HMG2 catalyze the reduction of hydroxymethylglutaryl-CoA (HMG-CoA) to mevalonate that is the rate-limiting step within the first mosule. The first module starts with the action of the cytosolic acetyl-CoA acetyltransferase ERG10 that catalyzes the formation of acetoacetyl-CoA. The hydroxymethylglutaryl-CoA synthase ERG13 then condenses acetyl-CoA with acetoacetyl-CoA to form HMG-CoA. The rate-limiting step of the early module is the reduction to mevalonate by the 3-hydroxy-3-methylglutaryl-coenzyme A (HMG-CoA) reductases HMG1 and HMG2 which are derived from a single ancestral HMGR gene by gene duplication. This is 3-hydroxy-3-methylglutaryl-coenzyme A reductase 2 from Saccharomyces cerevisiae (strain ATCC 204508 / S288c) (Baker's yeast).